The chain runs to 281 residues: Undecaprenyl-diphosphatase (281 aa).

Transmembrane regions (helical) follow at residues 4–24 (IEIL…WLPI), 45–65 (AFMS…VMVI), 89–109 (WLKV…DDWF), 113–133 (FHNM…FIYL), 152–172 (LPYT…LPGT), 190–210 (SVVT…ASAL), 225–245 (GQLF…MVAI), and 257–277 (FTLF…YSFV).

This sequence belongs to the UppP family.

It is found in the cell membrane. It carries out the reaction di-trans,octa-cis-undecaprenyl diphosphate + H2O = di-trans,octa-cis-undecaprenyl phosphate + phosphate + H(+). Catalyzes the dephosphorylation of undecaprenyl diphosphate (UPP). Confers resistance to bacitracin. This Streptococcus pneumoniae (strain Hungary19A-6) protein is Undecaprenyl-diphosphatase.